The chain runs to 74 residues: MAQSVNIQDQYLNQLRKNHISVTVFLTNGFQLRGLVKAFDNFTVLLETDGKQQLIFKHAISTFSPVKNVSLDKE.

Residues 9 to 69 form the Sm domain; that stretch reads DQYLNQLRKN…ISTFSPVKNV (61 aa).

Belongs to the Hfq family. Homohexamer.

Functionally, RNA chaperone that binds small regulatory RNA (sRNAs) and mRNAs to facilitate mRNA translational regulation in response to envelope stress, environmental stress and changes in metabolite concentrations. Also binds with high specificity to tRNAs. The chain is RNA-binding protein Hfq from Oceanobacillus iheyensis (strain DSM 14371 / CIP 107618 / JCM 11309 / KCTC 3954 / HTE831).